The chain runs to 139 residues: SPbeta prophage-derived uncharacterized protein YomN (139 aa).

This chain is SPbeta prophage-derived uncharacterized protein YomN (yomN), found in Bacillus subtilis (strain 168).